A 256-amino-acid chain; its full sequence is Hemin import ATP-binding protein HmuV (256 aa).

Residues 2-238 form the ABC transporter domain; the sequence is ISAQNLVYSL…QALTMLYGAD (237 aa). ATP is bound at residue 34 to 41; it reads GPNGAGKS.

This sequence belongs to the ABC transporter superfamily. Heme (hemin) importer (TC 3.A.1.14.5) family. The complex is composed of two ATP-binding proteins (HmuV), two transmembrane proteins (HmuU) and a solute-binding protein (HmuT).

It localises to the cell inner membrane. Its function is as follows. Part of the ABC transporter complex HmuTUV involved in hemin import. Responsible for energy coupling to the transport system. This is Hemin import ATP-binding protein HmuV from Shigella dysenteriae serotype 1 (strain Sd197).